Reading from the N-terminus, the 714-residue chain is Penicillin-binding protein 1F (714 aa).

The Cytoplasmic segment spans residues 1–12 (MFKIKKKKLFIP). The chain crosses the membrane as a helical; Signal-anchor for type II membrane protein span at residues 13-33 (IIILVLTAFLALIGYISIIFL). The Extracellular portion of the chain corresponds to 34–714 (GHYVIDEKKL…DYVQPKLFSS (681 aa)). The transglycosylase stretch occupies residues 49 to 217 (SKIVDQNGDE…STYSPILHPD (169 aa)). The active-site Proton donor; for transglycosylase activity is E87. Positions 297–592 (SKLQKTAYQV…SSYPTRLFKD (296 aa)) are transpeptidase. S359 (acyl-ester intermediate; for transpeptidase activity) is an active-site residue.

It in the N-terminal section; belongs to the glycosyltransferase 51 family. The protein in the C-terminal section; belongs to the transpeptidase family.

It is found in the cell membrane. The catalysed reaction is [GlcNAc-(1-&gt;4)-Mur2Ac(oyl-L-Ala-gamma-D-Glu-L-Lys-D-Ala-D-Ala)](n)-di-trans,octa-cis-undecaprenyl diphosphate + beta-D-GlcNAc-(1-&gt;4)-Mur2Ac(oyl-L-Ala-gamma-D-Glu-L-Lys-D-Ala-D-Ala)-di-trans,octa-cis-undecaprenyl diphosphate = [GlcNAc-(1-&gt;4)-Mur2Ac(oyl-L-Ala-gamma-D-Glu-L-Lys-D-Ala-D-Ala)](n+1)-di-trans,octa-cis-undecaprenyl diphosphate + di-trans,octa-cis-undecaprenyl diphosphate + H(+). It carries out the reaction Preferential cleavage: (Ac)2-L-Lys-D-Ala-|-D-Ala. Also transpeptidation of peptidyl-alanyl moieties that are N-acyl substituents of D-alanine.. Its pathway is cell wall biogenesis; peptidoglycan biosynthesis. Cell wall formation. May be involved in outgrowth of the germinated spore or it could function in the synthesis of the germ cell wall. The chain is Penicillin-binding protein 1F (pbpF) from Bacillus subtilis (strain 168).